Consider the following 451-residue polypeptide: Glycine--tRNA ligase (451 aa).

Substrate is bound by residues Arg-94 and Glu-164. ATP-binding positions include 196–198, 206–211, 281–282, and 325–328; these read RNE, FRTREF, EL, and GVER. Residue 211–215 coordinates substrate; sequence FEQME. 321–325 is a substrate binding site; it reads EPSVG.

The protein belongs to the class-II aminoacyl-tRNA synthetase family. Homodimer.

The protein localises to the cytoplasm. It carries out the reaction tRNA(Gly) + glycine + ATP = glycyl-tRNA(Gly) + AMP + diphosphate. In terms of biological role, catalyzes the attachment of glycine to tRNA(Gly). This Mesoplasma florum (strain ATCC 33453 / NBRC 100688 / NCTC 11704 / L1) (Acholeplasma florum) protein is Glycine--tRNA ligase.